We begin with the raw amino-acid sequence, 139 residues long: Translation initiation factor 2 subunit beta (139 aa).

It belongs to the eIF-2-beta/eIF-5 family. As to quaternary structure, heterotrimer composed of an alpha, a beta and a gamma chain.

In terms of biological role, eIF-2 functions in the early steps of protein synthesis by forming a ternary complex with GTP and initiator tRNA. The sequence is that of Translation initiation factor 2 subunit beta from Sulfurisphaera tokodaii (strain DSM 16993 / JCM 10545 / NBRC 100140 / 7) (Sulfolobus tokodaii).